Reading from the N-terminus, the 838-residue chain is DNA gyrase subunit A (838 aa).

One can recognise a Topo IIA-type catalytic domain in the interval 41–510 (LPEVRDGLKP…ADGDVSDEDL (470 aa)). Tyrosine 129 functions as the O-(5'-phospho-DNA)-tyrosine intermediate in the catalytic mechanism. The GyrA-box motif lies at 537 to 543 (QKRGGKG).

It belongs to the type II topoisomerase GyrA/ParC subunit family. Heterotetramer, composed of two GyrA and two GyrB chains. In the heterotetramer, GyrA contains the active site tyrosine that forms a transient covalent intermediate with DNA, while GyrB binds cofactors and catalyzes ATP hydrolysis. Mg(2+) serves as cofactor.

Its subcellular location is the cytoplasm. It carries out the reaction ATP-dependent breakage, passage and rejoining of double-stranded DNA.. With respect to regulation, DNA supercoiling is inhibited by EDTA, novobiocin, coumermycin and ciprofloxacin. In terms of biological role, a type II topoisomerase that negatively supercoils closed circular double-stranded (ds) DNA in an ATP-dependent manner to modulate DNA topology and maintain chromosomes in an underwound state. Also catalyzes the interconversion of other topological isomers of double-stranded DNA rings, including catenanes and knotted rings. Relaxes negatively supercoiled DNA in an ATP-independent manner. A linear reaction intermediate can be trapped in the presence of the antibiotic ciprofloxacin. Negative supercoiling favors strand separation, and DNA replication, transcription, recombination and repair, all of which involve strand separation. Type II topoisomerases break and join 2 DNA strands simultaneously in an ATP-dependent manner. In Mycobacterium bovis (strain BCG / Pasteur 1173P2), this protein is DNA gyrase subunit A.